The following is a 227-amino-acid chain: Ion-translocating oxidoreductase complex subunit E (227 aa).

5 helical membrane passes run 57-77, 89-109, 111-131, 146-166, and 200-220; these read LGLG…ISLF, IYVM…NAFA, PVYQ…IVIG, AFDG…LGAI, and GLLL…ILAV.

It belongs to the NqrDE/RnfAE family. The complex is composed of six subunits: RnfA, RnfB, RnfC, RnfD, RnfE and RnfG.

The protein resides in the cell inner membrane. In terms of biological role, part of a membrane-bound complex that couples electron transfer with translocation of ions across the membrane. In Haemophilus ducreyi (strain 35000HP / ATCC 700724), this protein is Ion-translocating oxidoreductase complex subunit E.